The sequence spans 670 residues: Protein angel homolog 1 (670 aa).

A phosphoserine mark is found at Ser-77 and Ser-105.

This sequence belongs to the CCR4/nocturin family.

In Homo sapiens (Human), this protein is Protein angel homolog 1 (ANGEL1).